We begin with the raw amino-acid sequence, 329 residues long: 3-dehydroquinate synthase (329 aa).

Belongs to the archaeal-type DHQ synthase family.

The enzyme catalyses 2-amino-2,3,7-trideoxy-D-lyxo-hept-6-ulosonate + NAD(+) + H2O = 3-dehydroquinate + NH4(+) + NADH + H(+). Functionally, catalyzes the oxidative deamination and cyclization of 2-amino-3,7-dideoxy-D-threo-hept-6-ulosonic acid (ADH) to yield 3-dehydroquinate (DHQ), which is fed into the canonical shikimic pathway of aromatic amino acid biosynthesis. The polypeptide is 3-dehydroquinate synthase (Methanoregula boonei (strain DSM 21154 / JCM 14090 / 6A8)).